Here is a 796-residue protein sequence, read N- to C-terminus: MSEAIKSKTVDYSSDEYLKRVDEYWRAANYISVGQLYLLNNPLLREPLKATDVKVHPIGHWGTIAGQNFIYAHLNRAINKYGLNMFYIEGPGHGGQVMVSNSYLDGTYTETYPKITQDKAGMKRLFKQFSFPGGVASHADPKTPGSIHEGGELGYSILHGAGAVLDNPGLIAATVVGDGESETGPLATSWQVNKFLNPITDGTVLPILNLNGFKISNPTVLSRESHEELEDYFKGLGWDPHFVEGTDPAKMHKIMAEELDKVIEEIHAIRKNAKDNNDESRPKWPMIVFRAPKGWTGPKSWDGEPIEGSFRAHQIPIPVDRNHMEHADKLVDWLKSYKPEELFDENGTLKPEIAAIIPEGQARMAANPVTNGGKLTKDLITPNIDDYALDNKSHGKEDGSDMTELGKYIRDLIELNKDNKNFRGWGPDETLSNKLGAAFEDTKRQWMEPIHEPNDALLAPQGRIIDSMLSEHMDEGMLEAYNLTGRYGFFASYESFLRVVDSMLTQHFKWLRNSHEETPWRADVPSLNVIASSTAFQQDHNGYSHQDPGIISHLAEKKTEYVRAYLPGDANTLIATFDKAIQSKQLINLIIASKHPRPQWFTMDEAKRLVRDGLGVVDWASTDHGEEPDVVFATAGSEPTTESLAAVSILHARFPEMKIRFINVVDLLKLKKDDPRGLSDAEFDAFFTKDKPVIFAYHAYDDLVKTIFFDRHNHNLHVHGYREEGDITTPFDMRVRNELDRFHLVKAALLATPAYAEKGAHVIQEMNSILDKHHDYIRAEGTDIPEVENWKWTALK.

The protein belongs to the XFP family. The cofactor is thiamine diphosphate.

In Lactiplantibacillus plantarum (strain ATCC BAA-793 / NCIMB 8826 / WCFS1) (Lactobacillus plantarum), this protein is Probable phosphoketolase 2.